A 436-amino-acid chain; its full sequence is Glutamyl-tRNA reductase (436 aa).

Substrate is bound by residues 49–52, serine 109, 114–116, and glutamine 120; these read TCNR and EGQ. Cysteine 50 (nucleophile) is an active-site residue. NADP(+) is bound at residue 198 to 203; the sequence is GAGRMS.

Belongs to the glutamyl-tRNA reductase family. Homodimer.

The enzyme catalyses (S)-4-amino-5-oxopentanoate + tRNA(Glu) + NADP(+) = L-glutamyl-tRNA(Glu) + NADPH + H(+). The protein operates within porphyrin-containing compound metabolism; protoporphyrin-IX biosynthesis; 5-aminolevulinate from L-glutamyl-tRNA(Glu): step 1/2. Its pathway is porphyrin-containing compound metabolism; chlorophyll biosynthesis. In terms of biological role, catalyzes the NADPH-dependent reduction of glutamyl-tRNA(Glu) to glutamate 1-semialdehyde (GSA). The sequence is that of Glutamyl-tRNA reductase from Prochlorococcus marinus (strain MIT 9303).